A 182-amino-acid polypeptide reads, in one-letter code: Large ribosomal subunit protein uL5 (182 aa).

The protein belongs to the universal ribosomal protein uL5 family. As to quaternary structure, part of the 50S ribosomal subunit; part of the 5S rRNA/L5/L18/L25 subcomplex. Contacts the 5S rRNA and the P site tRNA. Forms a bridge to the 30S subunit in the 70S ribosome.

This is one of the proteins that bind and probably mediate the attachment of the 5S RNA into the large ribosomal subunit, where it forms part of the central protuberance. In the 70S ribosome it contacts protein S13 of the 30S subunit (bridge B1b), connecting the 2 subunits; this bridge is implicated in subunit movement. Contacts the P site tRNA; the 5S rRNA and some of its associated proteins might help stabilize positioning of ribosome-bound tRNAs. The polypeptide is Large ribosomal subunit protein uL5 (Trichormus variabilis (strain ATCC 29413 / PCC 7937) (Anabaena variabilis)).